We begin with the raw amino-acid sequence, 114 residues long: T cell receptor beta variable 5-8 (114 aa).

The signal sequence occupies residues 1–21 (MGPRLLFWALLCLLGTGPVEA). Residues 22-114 (GVTQSPTHLI…SALYLCASSL (93 aa)) form the Ig-like domain. C42 and C110 are joined by a disulfide. N-linked (GlcNAc...) asparagine glycosylation is present at N90.

As to quaternary structure, alpha-beta TR is a heterodimer composed of an alpha and beta chain; disulfide-linked. The alpha-beta TR is associated with the transmembrane signaling CD3 coreceptor proteins to form the TR-CD3 (TcR or TCR). The assembly of alpha-beta TR heterodimers with CD3 occurs in the endoplasmic reticulum where a single alpha-beta TR heterodimer associates with one CD3D-CD3E heterodimer, one CD3G-CD3E heterodimer and one CD247 homodimer forming a stable octameric structure. CD3D-CD3E and CD3G-CD3E heterodimers preferentially associate with TR alpha and TR beta chains, respectively. The association of the CD247 homodimer is the last step of TcR assembly in the endoplasmic reticulum and is required for transport to the cell surface.

It localises to the cell membrane. V region of the variable domain of T cell receptor (TR) beta chain that participates in the antigen recognition. Alpha-beta T cell receptors are antigen specific receptors which are essential to the immune response and are present on the cell surface of T lymphocytes. Recognize peptide-major histocompatibility (MH) (pMH) complexes that are displayed by antigen presenting cells (APC), a prerequisite for efficient T cell adaptive immunity against pathogens. Binding of alpha-beta TR to pMH complex initiates TR-CD3 clustering on the cell surface and intracellular activation of LCK that phosphorylates the ITAM motifs of CD3G, CD3D, CD3E and CD247 enabling the recruitment of ZAP70. In turn ZAP70 phosphorylates LAT, which recruits numerous signaling molecules to form the LAT signalosome. The LAT signalosome propagates signal branching to three major signaling pathways, the calcium, the mitogen-activated protein kinase (MAPK) kinase and the nuclear factor NF-kappa-B (NF-kB) pathways, leading to the mobilization of transcription factors that are critical for gene expression and essential for T cell growth and differentiation. The T cell repertoire is generated in the thymus, by V-(D)-J rearrangement. This repertoire is then shaped by intrathymic selection events to generate a peripheral T cell pool of self-MH restricted, non-autoaggressive T cells. Post-thymic interaction of alpha-beta TR with the pMH complexes shapes TR structural and functional avidity. The chain is T cell receptor beta variable 5-8 from Homo sapiens (Human).